The sequence spans 663 residues: MFDWEEEELTNMIWGDDAETGDHIVPFKVRSEQLNKKEQIEESKTAEQKITGTKIDLHDKNLGSSSSHNVDEGLPQPDFCMSSWPDTSLTNATKVDQDLSATELSKCLAEPVRYDSTRGGAFLLKQSCFTWVRSFQSNHFKSCVLTLFLPEKTSELGKGPDIFHSSDESKEQGDFDDYSWANIGSFDDLDRMFSDGFAAMMSLYLVMAVSAVVMSYGHLLKITEFEQQENQQFPLTGKANGLSSQSVPSVRVTLKADQYREHKGQPSVEDQPYQQNKMMKFSKMPGTSEARPFQELYGQRIPFSNSAGKCVNQLAPPQSSLMAVNLLSESEGSGTSHYSHMPNQYMANSAFGNLANPYSSVPVISAVQHPDVRNQLMHPSYNPATATSVNMATDASARPSTMTPQEKLEKLRRRQQMQAMLAIQRQQQQFSHQVPVADQSITQNCLQDIPLQLVDKTNLQGLTAMPSFDPSSSLEQDDSGKFAAAVDNSAEFAVLYRLQDVVAKLDMGTRTCIRDSLFRLAGSAAQRHYTSDTSHSNKTSQDDQEVIPREESRYRYAGMPDTEAVTNPTDRTVAHLLFHRPFDMLAAKRMEGPESPASSKMGTEEKGNFPKCSIRETHLTKQKAQKEEGPADSLALGNAPNSGSSSTVGERVVEASQGNKRKL.

Disordered regions lie at residues 528 to 549 and 590 to 663; these read HYTS…VIPR and MEGP…KRKL. The segment covering 602–629 has biased composition (basic and acidic residues); the sequence is GTEEKGNFPKCSIRETHLTKQKAQKEEG. The span at 639–648 shows a compositional bias: polar residues; it reads APNSGSSSTV.

Interacts with CCA1, LHY, REV4 and REV8, but not with PRR7 or PRR9. As to expression, expressed in roots, stems, leaves, seedlings, cotyledons, inflorescences and siliques. Highest expression in root tips, young leaves and vasculatur tissues.

It localises to the nucleus. Transcriptional coactivator necessary for expression of the clock genes PRR5 and TOC1. Antagonizes REV8 function in the regulation of anthocyanin accumulation. Involved in red light input to the clock. Activates clock-controlled genes with afternoon peak. Mediates light inhibition of hypocotyl elongation. Unable to bind to DNA, but recruited to the evening element (EE)-containing region of the PRR5 and TOC1 promoters through its interaction with the DNA binding proteins REV8 and REV4. The sequence is that of Protein LNK2 from Arabidopsis thaliana (Mouse-ear cress).